A 421-amino-acid chain; its full sequence is 4-hydroxy-3-methylbut-2-en-1-yl diphosphate synthase (flavodoxin) (421 aa).

Cys-311, Cys-314, Cys-357, and Glu-364 together coordinate [4Fe-4S] cluster.

This sequence belongs to the IspG family. Requires [4Fe-4S] cluster as cofactor.

It catalyses the reaction (2E)-4-hydroxy-3-methylbut-2-enyl diphosphate + oxidized [flavodoxin] + H2O + 2 H(+) = 2-C-methyl-D-erythritol 2,4-cyclic diphosphate + reduced [flavodoxin]. Its pathway is isoprenoid biosynthesis; isopentenyl diphosphate biosynthesis via DXP pathway; isopentenyl diphosphate from 1-deoxy-D-xylulose 5-phosphate: step 5/6. Its function is as follows. Converts 2C-methyl-D-erythritol 2,4-cyclodiphosphate (ME-2,4cPP) into 1-hydroxy-2-methyl-2-(E)-butenyl 4-diphosphate. This chain is 4-hydroxy-3-methylbut-2-en-1-yl diphosphate synthase (flavodoxin), found in Xanthomonas oryzae pv. oryzae (strain MAFF 311018).